The following is a 921-amino-acid chain: Leucine--tRNA ligase (921 aa).

Residues 41–52 (PYPSGSGLHVGH) carry the 'HIGH' region motif. The 'KMSKS' region motif lies at 695 to 699 (KMSKS). Lysine 698 provides a ligand contact to ATP.

The protein belongs to the class-I aminoacyl-tRNA synthetase family.

Its subcellular location is the cytoplasm. It carries out the reaction tRNA(Leu) + L-leucine + ATP = L-leucyl-tRNA(Leu) + AMP + diphosphate. In Cytophaga hutchinsonii (strain ATCC 33406 / DSM 1761 / CIP 103989 / NBRC 15051 / NCIMB 9469 / D465), this protein is Leucine--tRNA ligase.